Reading from the N-terminus, the 232-residue chain is 5'-methylthioadenosine/S-adenosylhomocysteine nucleosidase (232 aa).

The active-site Proton acceptor is the Glu-12. Residues Gly-78, Ile-152, and 173-174 each bind substrate; that span reads ME. Asp-197 functions as the Proton donor in the catalytic mechanism.

It belongs to the PNP/UDP phosphorylase family. MtnN subfamily. Homodimer.

The enzyme catalyses S-adenosyl-L-homocysteine + H2O = S-(5-deoxy-D-ribos-5-yl)-L-homocysteine + adenine. It catalyses the reaction S-methyl-5'-thioadenosine + H2O = 5-(methylsulfanyl)-D-ribose + adenine. It carries out the reaction 5'-deoxyadenosine + H2O = 5-deoxy-D-ribose + adenine. It participates in amino-acid biosynthesis; L-methionine biosynthesis via salvage pathway; S-methyl-5-thio-alpha-D-ribose 1-phosphate from S-methyl-5'-thioadenosine (hydrolase route): step 1/2. Its function is as follows. Catalyzes the irreversible cleavage of the glycosidic bond in both 5'-methylthioadenosine (MTA) and S-adenosylhomocysteine (SAH/AdoHcy) to adenine and the corresponding thioribose, 5'-methylthioribose and S-ribosylhomocysteine, respectively. Also cleaves 5'-deoxyadenosine, a toxic by-product of radical S-adenosylmethionine (SAM) enzymes, into 5-deoxyribose and adenine. Thus, is required for in vivo function of the radical SAM enzymes biotin synthase and lipoic acid synthase, that are inhibited by 5'-deoxyadenosine accumulation. The chain is 5'-methylthioadenosine/S-adenosylhomocysteine nucleosidase from Salmonella agona (strain SL483).